Here is a 152-residue protein sequence, read N- to C-terminus: Deoxyuridine 5'-triphosphate nucleotidohydrolase (152 aa).

Residues Arg-71–Gly-73, Asn-84, Leu-88–Asp-90, and Met-98 each bind substrate.

The protein belongs to the dUTPase family. Mg(2+) is required as a cofactor.

It catalyses the reaction dUTP + H2O = dUMP + diphosphate + H(+). It participates in pyrimidine metabolism; dUMP biosynthesis; dUMP from dCTP (dUTP route): step 2/2. Its function is as follows. This enzyme is involved in nucleotide metabolism: it produces dUMP, the immediate precursor of thymidine nucleotides and it decreases the intracellular concentration of dUTP so that uracil cannot be incorporated into DNA. The protein is Deoxyuridine 5'-triphosphate nucleotidohydrolase of Haemophilus ducreyi (strain 35000HP / ATCC 700724).